A 136-amino-acid chain; its full sequence is Large ribosomal subunit protein uL16 (136 aa).

It belongs to the universal ribosomal protein uL16 family. In terms of assembly, part of the 50S ribosomal subunit.

Functionally, binds 23S rRNA and is also seen to make contacts with the A and possibly P site tRNAs. This is Large ribosomal subunit protein uL16 from Vibrio atlanticus (strain LGP32) (Vibrio splendidus (strain Mel32)).